A 325-amino-acid polypeptide reads, in one-letter code: Elongation factor P--(R)-beta-lysine ligase (325 aa).

76–78 (SPE) is a substrate binding site. ATP is bound by residues 100–102 (RNE) and N109. Y118 contacts substrate. 244-245 (EL) is an ATP binding site. E251 is a substrate binding site. G300 provides a ligand contact to ATP.

Belongs to the class-II aminoacyl-tRNA synthetase family. EpmA subfamily. As to quaternary structure, homodimer.

It carries out the reaction D-beta-lysine + L-lysyl-[protein] + ATP = N(6)-((3R)-3,6-diaminohexanoyl)-L-lysyl-[protein] + AMP + diphosphate + H(+). With EpmB is involved in the beta-lysylation step of the post-translational modification of translation elongation factor P (EF-P). Catalyzes the ATP-dependent activation of (R)-beta-lysine produced by EpmB, forming a lysyl-adenylate, from which the beta-lysyl moiety is then transferred to the epsilon-amino group of a conserved specific lysine residue in EF-P. This Yersinia pseudotuberculosis serotype O:1b (strain IP 31758) protein is Elongation factor P--(R)-beta-lysine ligase.